Consider the following 149-residue polypeptide: Transcriptional repressor NrdR (149 aa).

Residues 3–34 (CPFCSAVDTKVIDSRLVGDGSQVRRRRQCLVC) fold into a zinc finger. One can recognise an ATP-cone domain in the interval 49-139 (PRVVKSNGVR…VYRSFEDVRE (91 aa)).

Belongs to the NrdR family. It depends on Zn(2+) as a cofactor.

In terms of biological role, negatively regulates transcription of bacterial ribonucleotide reductase nrd genes and operons by binding to NrdR-boxes. This is Transcriptional repressor NrdR from Edwardsiella ictaluri (strain 93-146).